The following is a 331-amino-acid chain: Fructose-1,6-bisphosphatase class 1 2 (331 aa).

Mg(2+) is bound by residues Glu91, Asp112, Leu114, and Asp115. Substrate contacts are provided by residues Asp115–Ser118, Asn207, Tyr238, and Lys268. Glu274 is a binding site for Mg(2+).

Belongs to the FBPase class 1 family. In terms of assembly, homotetramer. Mg(2+) serves as cofactor.

It localises to the cytoplasm. The catalysed reaction is beta-D-fructose 1,6-bisphosphate + H2O = beta-D-fructose 6-phosphate + phosphate. It participates in carbohydrate biosynthesis; Calvin cycle. In Acaryochloris marina (strain MBIC 11017), this protein is Fructose-1,6-bisphosphatase class 1 2.